The primary structure comprises 275 residues: uncharacterized protein (275 aa).

This is an uncharacterized protein from Acanthamoeba polyphaga mimivirus (APMV).